Here is a 118-residue protein sequence, read N- to C-terminus: Galanin peptides (118 aa).

A signal peptide spans 1-19 (MHRCVGGVCVSLIVCAFLT). The propeptide occupies 20 to 30 (ETLGMVIAAKE). Alanine amide is present on Ala61.

This sequence belongs to the galanin family. In terms of tissue distribution, strongly expressed in brain and stomach, moderately in the eye, and very weakly in heart, kidney and gills. Not detected in liver.

The protein localises to the secreted. Endocrine hormone of the central and peripheral nervous systems that binds and activates the G protein-coupled receptors GALR1 (galr1a and galr1b) and GALR2 (galr2a and galr2b). This small neuropeptide may regulate diverse physiologic functions including contraction of smooth muscle of the gastrointestinal and genitourinary tract, growth hormone and insulin release and adrenal secretion. This is Galanin peptides from Danio rerio (Zebrafish).